The sequence spans 158 residues: Cyclic pyranopterin monophosphate synthase (158 aa).

Residues 74 to 76 (MCH) and 112 to 113 (ME) each bind substrate. D127 is a catalytic residue.

Belongs to the MoaC family. Homohexamer; trimer of dimers.

The enzyme catalyses (8S)-3',8-cyclo-7,8-dihydroguanosine 5'-triphosphate = cyclic pyranopterin phosphate + diphosphate. Its pathway is cofactor biosynthesis; molybdopterin biosynthesis. Catalyzes the conversion of (8S)-3',8-cyclo-7,8-dihydroguanosine 5'-triphosphate to cyclic pyranopterin monophosphate (cPMP). This Helicobacter pylori (strain G27) protein is Cyclic pyranopterin monophosphate synthase.